Here is a 512-residue protein sequence, read N- to C-terminus: ATP synthase subunit alpha 1 (512 aa).

169 to 176 lines the ATP pocket; it reads GDRQTGKT.

Belongs to the ATPase alpha/beta chains family. F-type ATPases have 2 components, CF(1) - the catalytic core - and CF(0) - the membrane proton channel. CF(1) has five subunits: alpha(3), beta(3), gamma(1), delta(1), epsilon(1). CF(0) has four main subunits: a(1), b(1), b'(1) and c(9-12).

Its subcellular location is the cell inner membrane. The catalysed reaction is ATP + H2O + 4 H(+)(in) = ADP + phosphate + 5 H(+)(out). Its function is as follows. Produces ATP from ADP in the presence of a proton gradient across the membrane. The alpha chain is a regulatory subunit. The sequence is that of ATP synthase subunit alpha 1 from Cereibacter sphaeroides (strain ATCC 17029 / ATH 2.4.9) (Rhodobacter sphaeroides).